A 517-amino-acid polypeptide reads, in one-letter code: UDP-N-acetylmuramoyl-L-alanyl-D-glutamate--2,6-diaminopimelate ligase (517 aa).

Residues leucine 34 and serine 36 each contribute to the UDP-N-acetyl-alpha-D-muramoyl-L-alanyl-D-glutamate site. ATP is bound at residue 122-128 (GTSGKTT). Residues 164-165 (TT), serine 191, and arginine 199 each bind UDP-N-acetyl-alpha-D-muramoyl-L-alanyl-D-glutamate. Lysine 231 is modified (N6-carboxylysine). Meso-2,6-diaminopimelate is bound by residues arginine 394, 418-421 (DNPR), glycine 476, and glutamate 480. The short motif at 418–421 (DNPR) is the Meso-diaminopimelate recognition motif element.

This sequence belongs to the MurCDEF family. MurE subfamily. The cofactor is Mg(2+). Post-translationally, carboxylation is probably crucial for Mg(2+) binding and, consequently, for the gamma-phosphate positioning of ATP.

The protein localises to the cytoplasm. It carries out the reaction UDP-N-acetyl-alpha-D-muramoyl-L-alanyl-D-glutamate + meso-2,6-diaminopimelate + ATP = UDP-N-acetyl-alpha-D-muramoyl-L-alanyl-gamma-D-glutamyl-meso-2,6-diaminopimelate + ADP + phosphate + H(+). The protein operates within cell wall biogenesis; peptidoglycan biosynthesis. Functionally, catalyzes the addition of meso-diaminopimelic acid to the nucleotide precursor UDP-N-acetylmuramoyl-L-alanyl-D-glutamate (UMAG) in the biosynthesis of bacterial cell-wall peptidoglycan. The chain is UDP-N-acetylmuramoyl-L-alanyl-D-glutamate--2,6-diaminopimelate ligase from Corynebacterium glutamicum (strain ATCC 13032 / DSM 20300 / JCM 1318 / BCRC 11384 / CCUG 27702 / LMG 3730 / NBRC 12168 / NCIMB 10025 / NRRL B-2784 / 534).